The chain runs to 420 residues: Serine hydroxymethyltransferase (420 aa).

(6S)-5,6,7,8-tetrahydrofolate contacts are provided by residues L123 and 127–129; that span reads GHL. The residue at position 232 (K232) is an N6-(pyridoxal phosphate)lysine. Residue 357-359 participates in (6S)-5,6,7,8-tetrahydrofolate binding; that stretch reads SPF.

This sequence belongs to the SHMT family. In terms of assembly, homodimer. Pyridoxal 5'-phosphate serves as cofactor.

It is found in the cytoplasm. It carries out the reaction (6R)-5,10-methylene-5,6,7,8-tetrahydrofolate + glycine + H2O = (6S)-5,6,7,8-tetrahydrofolate + L-serine. The protein operates within one-carbon metabolism; tetrahydrofolate interconversion. It functions in the pathway amino-acid biosynthesis; glycine biosynthesis; glycine from L-serine: step 1/1. In terms of biological role, catalyzes the reversible interconversion of serine and glycine with tetrahydrofolate (THF) serving as the one-carbon carrier. This reaction serves as the major source of one-carbon groups required for the biosynthesis of purines, thymidylate, methionine, and other important biomolecules. Also exhibits THF-independent aldolase activity toward beta-hydroxyamino acids, producing glycine and aldehydes, via a retro-aldol mechanism. In Streptococcus pyogenes serotype M12 (strain MGAS2096), this protein is Serine hydroxymethyltransferase.